The following is an 81-amino-acid chain: Antimicrobial peptide D2 (81 aa).

Positions 1–31 (MAKTVLGIHVTFLTLLFAVILLNDVMYTPVE) are cleaved as a signal peptide. 4 cysteine pairs are disulfide-bonded: C34–C81, C45–C66, C51–C75, and C55–C77.

Antimicrobial peptide probably active against fungi like B.sorokiniana, F.oxysporum, F.graminearum, F.avenaceum, B.cinerea, P.beta, P.infestans and P.debaryanum. The polypeptide is Antimicrobial peptide D2 (Stellaria media (Common chickweed)).